The following is a 315-amino-acid chain: Zinc finger protein 691 (315 aa).

Residues 1 to 10 (MSLCSPTHSA) show a composition bias toward polar residues. Residues 1 to 90 (MSLCSPTHSA…QETHPKKPWQ (90 aa)) are disordered. The span at 33–58 (GSEKEQSPEPHLPEEGEGGKPWRVDD) shows a compositional bias: basic and acidic residues. A phosphoserine mark is found at S39, S75, and S77. A Glycyl lysine isopeptide (Lys-Gly) (interchain with G-Cter in SUMO2) cross-link involves residue K113. C2H2-type zinc fingers lie at residues 115-137 (FICA…QRIH), 143-165 (YKCS…ERIH), 171-193 (YKCP…QQDH), 199-221 (YRCD…HRTH), 227-249 (YICC…HRTH), 255-277 (YECT…QRTH), and 283-305 (YRCT…QKTH).

It belongs to the krueppel C2H2-type zinc-finger protein family.

The protein localises to the nucleus. Functionally, may be involved in transcriptional regulation. This is Zinc finger protein 691 (ZNF691) from Homo sapiens (Human).